The following is a 499-amino-acid chain: Gypsy retrotransposon integrase-like protein 1 (499 aa).

The Integrase catalytic domain maps to 113–270; that stretch reads KVENPWSIVT…TPYFQMFNRN (158 aa).

The sequence is that of Gypsy retrotransposon integrase-like protein 1 (GIN1) from Bos taurus (Bovine).